Here is a 600-residue protein sequence, read N- to C-terminus: Elongation factor 4 (600 aa).

Residues 6–188 (QFIRNFSIIA…QITKQIPSPK (183 aa)) form the tr-type G domain. GTP is bound by residues 18-23 (DHGKST) and 135-138 (NKID).

It belongs to the TRAFAC class translation factor GTPase superfamily. Classic translation factor GTPase family. LepA subfamily.

It localises to the cell inner membrane. The enzyme catalyses GTP + H2O = GDP + phosphate + H(+). Required for accurate and efficient protein synthesis under certain stress conditions. May act as a fidelity factor of the translation reaction, by catalyzing a one-codon backward translocation of tRNAs on improperly translocated ribosomes. Back-translocation proceeds from a post-translocation (POST) complex to a pre-translocation (PRE) complex, thus giving elongation factor G a second chance to translocate the tRNAs correctly. Binds to ribosomes in a GTP-dependent manner. This Leptospira interrogans serogroup Icterohaemorrhagiae serovar copenhageni (strain Fiocruz L1-130) protein is Elongation factor 4.